The following is an 885-amino-acid chain: Eukaryotic translation initiation factor 3 subunit C (885 aa).

The disordered stretch occupies residues 1 to 81; sequence MSFFAKLQGS…SDSDDERQAV (81 aa). Residues 9–28 show a composition bias toward low complexity; that stretch reads GSDSESSSGSESEESILSGS. The segment covering 55-76 has biased composition (acidic residues); the sequence is EESESEEESSDEDEEEMSDSDD. The 174-residue stretch at 624 to 797 folds into the PCI domain; the sequence is FHMHLNVELL…GVVIFHRVEQ (174 aa). Residues 822–885 are disordered; it reads LDVKLGNQGQ…TTMGRRVTAQ (64 aa). Residues 855 to 872 show a composition bias toward gly residues; that stretch reads RGTYRGRGGRGGRGGFNQ.

The protein belongs to the eIF-3 subunit C family. In terms of assembly, component of the eukaryotic translation initiation factor 3 (eIF-3) complex.

Its subcellular location is the cytoplasm. In terms of biological role, component of the eukaryotic translation initiation factor 3 (eIF-3) complex, which is involved in protein synthesis of a specialized repertoire of mRNAs and, together with other initiation factors, stimulates binding of mRNA and methionyl-tRNAi to the 40S ribosome. The eIF-3 complex specifically targets and initiates translation of a subset of mRNAs involved in cell proliferation. The sequence is that of Eukaryotic translation initiation factor 3 subunit C from Cryptococcus neoformans var. neoformans serotype D (strain B-3501A) (Filobasidiella neoformans).